The sequence spans 546 residues: MFS-type transporter GME11371 (546 aa).

7 helical membrane passes run 39-59 (LTYLFLALILCMLLAVIDLTI), 77-96 (IGWYASVFFMTVASSQSSWG), 107-127 (MFLLAMGIFELGNVICGAAPT), 137-157 (ITGIGAAGVIAGCFTVAAFAV), 167-187 (GGLAATYGVGSSIGPIIGGVL), 195-215 (WCFYINLPIGGFAAIVLFLFF), and 240-260 (FPGFFCCIAAVTCLLLALLWG). Asn-267 is a glycosylation site (N-linked (GlcNAc...) asparagine). A run of 7 helical transmembrane segments spans residues 270–290 (DVIGTLVGFFLFTALFAVVEW), 307–327 (VVLFGTIGGFFAGGAQFVLVY), 349–369 (LPYIIGSTITTIVAGTTISAT), 370–390 (GYFTPLIVGGGALWTVSAGLI), 402–422 (WIGYQALAGLAVGLCYQPPIL), 433–453 (VAATSAILLFFQTMGGAFMVS), and 509–529 (ISFAIIIALTGASTVAGIFMP).

This sequence belongs to the major facilitator superfamily.

The protein localises to the cell membrane. The protein operates within secondary metabolite biosynthesis. MFS-type transporter; part of the gene cluster that mediates the biosynthesis of dibenzodioxocinones such as pestalotiollide B, a novel class of inhibitors against cholesterol ester transfer protein (CEPT). essential for dibenzodioxocinones biosynthesis and may be involved in the secretion of the cluster products. In Pestalotiopsis microspora, this protein is MFS-type transporter GME11371.